Consider the following 134-residue polypeptide: UPF0715 membrane protein YoaG (134 aa).

Transmembrane regions (helical) follow at residues 9 to 29 (LMTL…YSFV), 35 to 55 (IIAL…YGLF), 72 to 92 (VMYL…FFVI), and 106 to 126 (FYYM…SLIL).

This sequence belongs to the UPF0715 family.

Its subcellular location is the cell membrane. In Bacillus subtilis (strain 168), this protein is UPF0715 membrane protein YoaG (yoaG).